The following is a 134-amino-acid chain: Large ribosomal subunit protein uL22 (134 aa).

Belongs to the universal ribosomal protein uL22 family. Part of the 50S ribosomal subunit.

This protein binds specifically to 23S rRNA; its binding is stimulated by other ribosomal proteins, e.g. L4, L17, and L20. It is important during the early stages of 50S assembly. It makes multiple contacts with different domains of the 23S rRNA in the assembled 50S subunit and ribosome. Its function is as follows. The globular domain of the protein is located near the polypeptide exit tunnel on the outside of the subunit, while an extended beta-hairpin is found that lines the wall of the exit tunnel in the center of the 70S ribosome. The protein is Large ribosomal subunit protein uL22 of Gluconacetobacter diazotrophicus (strain ATCC 49037 / DSM 5601 / CCUG 37298 / CIP 103539 / LMG 7603 / PAl5).